The following is a 161-amino-acid chain: Cell wall protein YLR042C (161 aa).

The N-terminal stretch at 1-24 is a signal peptide; that stretch reads MKISQFGSLAFAPIVLLQLFIVQA. 3 N-linked (GlcNAc...) asparagine glycosylation sites follow: asparagine 77, asparagine 104, and asparagine 120. A disordered region spans residues 111–139; that stretch reads FTPLPSSSRNETKSSQTTNTISSSTSTGG. The segment covering 123 to 137 has biased composition (low complexity); sequence KSSQTTNTISSSTST. A lipid anchor (GPI-anchor amidated glycine) is attached at glycine 139. The propeptide at 140–161 is removed in mature form; that stretch reads VGSVKPCLYFVLMLETIAYLFS.

The GPI-anchor is attached to the protein in the endoplasmic reticulum and serves to target the protein to the cell surface. There, the glucosamine-inositol phospholipid moiety is cleaved off and the GPI-modified mannoprotein is covalently attached via its lipidless GPI glycan remnant to the 1,6-beta-glucan of the outer cell wall layer.

It is found in the secreted. Its subcellular location is the cell wall. The protein localises to the membrane. In Saccharomyces cerevisiae (strain ATCC 204508 / S288c) (Baker's yeast), this protein is Cell wall protein YLR042C.